The sequence spans 2713 residues: Histone-lysine N-methyltransferase 2B (2713 aa).

Gly residues predominate over residues 1–11 (MAAAAGGGSCP). 3 disordered regions span residues 1–65 (MAAA…GEDT), 82–524 (RLWA…PTVV), and 542–783 (VSAR…ARVA). Position 2 is an N-acetylalanine (Ala-2). Over residues 12-24 (GPGSARGRFPGRP) the composition is skewed to low complexity. Residues 17–36 (RGRFPGRPRGSGGGGGRGGR) carry the Menin-binding motif (MBM) motif. Composition is skewed to gly residues over residues 25-38 (RGSG…GRGN) and 49-60 (RGGGAAGPGGAE). A DNA-binding region (a.T hook 1) is located at residues 37–44 (GNGAERVR). Residues 109 to 123 (PEEESSDGESEEEEF) are compositionally biased toward acidic residues. Residues 110 to 117 (EEESSDGE) constitute a DNA-binding region (a.T hook 2). Phosphoserine occurs at positions 113, 114, and 118. The segment covering 144 to 158 (QRGRAPRGRGRKHKT) has biased composition (basic residues). Residues 340-360 (PQRKDGDEPERGSCRKKQEQK) show a composition bias toward basic and acidic residues. A DNA-binding region (a.T hook 3) is located at residues 357–365 (QEQKLEEEE). Positions 361-393 (LEEEEEEEEKEGEEKEEKDDNEDNNKQEEEEET) are enriched in acidic residues. Residues 394–412 (ERAVAEEEAMLAKEKEEAK) show a composition bias toward basic and acidic residues. Positions 414 to 460 (PSPPLTPPVPSPPPPLPPPSTSPPPPASPLPPPVSPPPPLSPPPYPA) are enriched in pro residues. The segment covering 501 to 517 (GTLSPTPNPSTTTGSPL) has biased composition (low complexity). The segment covering 555–566 (RFMDEDPPKPPK) has biased composition (basic and acidic residues). Positions 577–605 (ATSPPAPQEPVPVSSPPRVPTPPSTPVPL) are enriched in pro residues. Positions 606-617 (PEKRRSILREPT) are enriched in basic and acidic residues. Pro residues predominate over residues 627–645 (LPPPPPAPPPAPSPPPAPA). 3 stretches are compositionally biased toward low complexity: residues 646–657 (TPSRRPLLLRAP), 715–728 (VPVV…EVPP), and 738–756 (QQLQ…LLPQ). Residues 757–774 (ALPPQQPQAQPPPSPQHT) are compositionally biased toward pro residues. A Glycyl lysine isopeptide (Lys-Gly) (interchain with G-Cter in SUMO2) cross-link involves residue Lys-810. Residues Ser-826, Ser-849, and Ser-866 each carry the phosphoserine modification. Disordered regions lie at residues 831 to 872 (TEEA…QGPR) and 899 to 964 (SALP…HHGK). A compositionally biased stretch (basic and acidic residues) spans 841–862 (TPDRGCVRSEDESMEAKRDRAS). Residues 912–922 (EDTSSASETES) are compositionally biased toward low complexity. Ser-941 carries the post-translational modification Phosphoserine. The span at 953–964 (TPRRSLPSHHGK) shows a compositional bias: basic residues. Residues 964 to 1011 (KKMRMARCGHCRGCLRVQDCGSCVNCLDKPKFGGPNTKKQCCVYRKCD) form a CXXC-type zinc finger. Zn(2+) contacts are provided by Cys-971, Cys-974, Cys-977, Cys-983, Cys-986, Cys-989, Cys-1005, and Cys-1010. Disordered stretches follow at residues 1032–1076 (LLPW…DSLL) and 1088–1138 (QRPS…LQPV). Phosphoserine is present on residues Ser-1037, Ser-1040, Ser-1098, and Ser-1101. Lys-1142 is covalently cross-linked (Glycyl lysine isopeptide (Lys-Gly) (interchain with G-Cter in SUMO2)). PHD-type zinc fingers lie at residues 1207 to 1258 (PMVC…CKFC), 1255 to 1309 (CKFC…CVRC), and 1341 to 1402 (GNYC…CAGA). Residues 1410-1510 (ALSGALQGGL…GLLLKLLESA (101 aa)) enclose the Bromo domain. Residues 1550 to 1572 (RQQESETPESGQPPGDPSAAFQS) are disordered. A C2HC pre-PHD-type zinc finger spans residues 1584 to 1624 (PRQCALCLKYGDADSKEAGRLLYIGQNEWTHVNCAIWSAEV). The PHD-type 4 zinc finger occupies 1645 to 1692 (MRCELCLKPGATVGCCLSSCLSNFHFMCARASYCIFQDDKKVFCQKHT). The FYR N-terminal domain occupies 1733-1789 (VINVLIGSIRINSLGTLSDLSDCEGRLFPIGYQCSRLYWSTVDARRRCWYRCRILEY). The span at 1808-1821 (QTIVHSPTPSSDTD) shows a compositional bias: polar residues. Disordered stretches follow at residues 1808 to 1973 (QTIV…GPDF), 2056 to 2104 (QLDG…PPED), 2116 to 2160 (NLGG…RTFA), 2279 to 2356 (VSTF…RCPL), and 2382 to 2408 (YSAG…PKRV). Composition is skewed to low complexity over residues 1872-1890 (PLGG…PSSL) and 1923-1933 (RRTSSPLRTSP). Phosphoserine is present on residues Ser-1926 and Ser-1932. Positions 1939-1950 (LSTSVTALTPTS) are enriched in polar residues. Positions 2058–2068 (DGVDDGTDSEA) are enriched in acidic residues. 2 positions are modified to phosphothreonine: Thr-2064 and Thr-2079. The segment covering 2084–2093 (PGVGRGGVLG) has biased composition (gly residues). A compositionally biased stretch (polar residues) spans 2140–2153 (NGSQPPQSLSTSPA). Residues Ser-2286 and Ser-2346 each carry the phosphoserine modification. In terms of domain architecture, FYR C-terminal spans 2409-2490 (GPHLRFEISS…QRCQHYKFRY (82 aa)). The WDR5 interaction motif (WIN) signature appears at 2506–2511 (GAARAE). Positions 2573–2689 (EAVGVYRSAI…RGEELTYDYK (117 aa)) constitute an SET domain. Residues His-2583, Arg-2585, Tyr-2627, and 2650–2651 (NH) contribute to the S-adenosyl-L-methionine site. Zn(2+) is bound by residues Cys-2653 and Cys-2701. One can recognise a Post-SET domain in the interval 2697 to 2713 (NKLPCNCGAKRCRRFLN). Position 2702 (Asn-2702) interacts with S-adenosyl-L-methionine. Residues Cys-2703 and Cys-2708 each coordinate Zn(2+).

The protein belongs to the class V-like SAM-binding methyltransferase superfamily. Histone-lysine methyltransferase family. TRX/MLL subfamily. As to quaternary structure, component of the menin-associated histone methyltransferase complex, at least composed of KMT2B/MLL4, ASH2L, RBBP5, WDR5, DPY30, MEN1; the complex interacts with POLR2A and POLR2B via MEN1. Interacts with NFE2. Interacts with KDM6B. Interacts (via WIN motif) with WDR5. Interacts (via MBM motif) with MEN1.

Its subcellular location is the nucleus. The catalysed reaction is L-lysyl(4)-[histone H3] + S-adenosyl-L-methionine = N(6)-methyl-L-lysyl(4)-[histone H3] + S-adenosyl-L-homocysteine + H(+). The enzyme catalyses N(6)-methyl-L-lysyl(4)-[histone H3] + S-adenosyl-L-methionine = N(6),N(6)-dimethyl-L-lysyl(4)-[histone H3] + S-adenosyl-L-homocysteine + H(+). Functionally, histone methyltransferase that catalyzes methyl group transfer from S-adenosyl-L-methionine to the epsilon-amino group of 'Lys-4' of histone H3 (H3K4) via a non-processive mechanism. Part of chromatin remodeling machinery predominantly forms H3K4me1 and H3K4me2 methylation marks at active chromatin sites where transcription and DNA repair take place. Likely plays a redundant role with KMT2C in enriching H3K4me1 marks on primed and active enhancer elements. Plays a central role in beta-globin locus transcription regulation by being recruited by NFE2. Plays an important role in controlling bulk H3K4me during oocyte growth and preimplantation development. Required during the transcriptionally active period of oocyte growth for the establishment and/or maintenance of bulk H3K4 trimethylation (H3K4me3), global transcriptional silencing that preceeds resumption of meiosis, oocyte survival and normal zygotic genome activation. The chain is Histone-lysine N-methyltransferase 2B (Kmt2b) from Mus musculus (Mouse).